A 130-amino-acid chain; its full sequence is Histone H2A type 1-K (130 aa).

Residues 1-22 (MSGRGKQGGKARAKAKTRSSRA) are disordered. Ser2 bears the N-acetylserine mark. The residue at position 2 (Ser2) is a Phosphoserine; by RPS6KA5. Residue Arg4 is modified to Citrulline; alternate. A Symmetric dimethylarginine; by PRMT5; alternate modification is found at Arg4. An N6-(2-hydroxyisobutyryl)lysine; alternate mark is found at Lys6 and Lys10. N6-(beta-hydroxybutyryl)lysine; alternate is present on Lys6. Lys6 and Lys10 each carry N6-acetyllysine; alternate. Positions 7-19 (QGGKARAKAKTRS) are enriched in basic residues. An N6-lactoyllysine; alternate modification is found at Lys10. Position 10 is an N6-succinyllysine; alternate (Lys10). Residues Lys14 and Lys16 each participate in a glycyl lysine isopeptide (Lys-Gly) (interchain with G-Cter in ubiquitin) cross-link. Lys37 carries the N6-(2-hydroxyisobutyryl)lysine; alternate modification. Lys37 bears the N6-(beta-hydroxybutyryl)lysine; alternate mark. Lys37 is modified (N6-crotonyllysine; alternate). N6-(2-hydroxyisobutyryl)lysine is present on residues Lys75 and Lys76. Lys96 is modified (N6-(2-hydroxyisobutyryl)lysine; alternate). Residue Lys96 is modified to N6-succinyllysine; alternate. Lys96 bears the N6-glutaryllysine; alternate mark. Position 105 is an N5-methylglutamine (Gln105). Lys119 carries the N6-(2-hydroxyisobutyryl)lysine; alternate modification. N6-crotonyllysine; alternate is present on residues Lys119 and Lys120. N6-glutaryllysine; alternate is present on residues Lys119 and Lys120. An N6-(beta-hydroxybutyryl)lysine; alternate modification is found at Lys120. Lys120 is covalently cross-linked (Glycyl lysine isopeptide (Lys-Gly) (interchain with G-Cter in ubiquitin); alternate). At Thr121 the chain carries Phosphothreonine; by DCAF1. Lys126 bears the N6-(beta-hydroxybutyryl)lysine; alternate mark. Lys126 is modified (N6-crotonyllysine; alternate). Lys126 is subject to N6-glutaryllysine; alternate.

Belongs to the histone H2A family. In terms of assembly, the nucleosome is a histone octamer containing two molecules each of H2A, H2B, H3 and H4 assembled in one H3-H4 heterotetramer and two H2A-H2B heterodimers. The octamer wraps approximately 147 bp of DNA. Deiminated on Arg-4 in granulocytes upon calcium entry. In terms of processing, monoubiquitination of Lys-120 (H2AK119Ub) by RING1, TRIM37 and RNF2/RING2 complex gives a specific tag for epigenetic transcriptional repression and participates in X chromosome inactivation of female mammals. It is involved in the initiation of both imprinted and random X inactivation. Ubiquitinated H2A is enriched in inactive X chromosome chromatin. Ubiquitination of H2A functions downstream of methylation of 'Lys-27' of histone H3 (H3K27me). H2AK119Ub by RNF2/RING2 can also be induced by ultraviolet and may be involved in DNA repair. Following DNA double-strand breaks (DSBs), it is ubiquitinated through 'Lys-63' linkage of ubiquitin moieties by the E2 ligase UBE2N and the E3 ligases RNF8 and RNF168, leading to the recruitment of repair proteins to sites of DNA damage. Ubiquitination at Lys-14 and Lys-16 (H2AK13Ub and H2AK15Ub, respectively) in response to DNA damage is initiated by RNF168 that mediates monoubiquitination at these 2 sites, and 'Lys-63'-linked ubiquitin are then conjugated to monoubiquitin; RNF8 is able to extend 'Lys-63'-linked ubiquitin chains in vitro. Deubiquitinated by USP51 at Lys-14 and Lys-16 (H2AK13Ub and H2AK15Ub, respectively) after damaged DNA is repaired. H2AK119Ub and ionizing radiation-induced 'Lys-63'-linked ubiquitination (H2AK13Ub and H2AK15Ub) are distinct events. Post-translationally, phosphorylation on Ser-2 (H2AS1ph) is enhanced during mitosis. Phosphorylation on Ser-2 by RPS6KA5/MSK1 directly represses transcription. Acetylation of H3 inhibits Ser-2 phosphorylation by RPS6KA5/MSK1. Phosphorylation at Thr-121 (H2AT120ph) by DCAF1 is present in the regulatory region of many tumor suppresor genes and down-regulates their transcription. Symmetric dimethylation on Arg-4 by the PRDM1/PRMT5 complex may play a crucial role in the germ-cell lineage. In terms of processing, glutamine methylation at Gln-105 (H2AQ104me) by FBL is specifically dedicated to polymerase I. It is present at 35S ribosomal DNA locus and impairs binding of the FACT complex. Post-translationally, crotonylation (Kcr) is specifically present in male germ cells and marks testis-specific genes in post-meiotic cells, including X-linked genes that escape sex chromosome inactivation in haploid cells. Crotonylation marks active promoters and enhancers and confers resistance to transcriptional repressors. It is also associated with post-meiotically activated genes on autosomes. Hydroxybutyrylation of histones is induced by starvation. In terms of processing, lactylated in macrophages by EP300/P300 by using lactoyl-CoA directly derived from endogenous or exogenous lactate, leading to stimulates gene transcription.

Its subcellular location is the nucleus. It localises to the chromosome. Functionally, core component of nucleosome. Nucleosomes wrap and compact DNA into chromatin, limiting DNA accessibility to the cellular machineries which require DNA as a template. Histones thereby play a central role in transcription regulation, DNA repair, DNA replication and chromosomal stability. DNA accessibility is regulated via a complex set of post-translational modifications of histones, also called histone code, and nucleosome remodeling. The sequence is that of Histone H2A type 1-K from Mus musculus (Mouse).